The sequence spans 337 residues: Fructose-1,6-bisphosphatase class 1 (337 aa).

Mg(2+) is bound by residues Glu91, Asp113, Leu115, and Asp116. Residues 116 to 119 (DGSS), Asn209, Tyr242, and Lys275 contribute to the substrate site. Glu281 is a Mg(2+) binding site.

Belongs to the FBPase class 1 family. In terms of assembly, homotetramer. Requires Mg(2+) as cofactor.

Its subcellular location is the cytoplasm. The enzyme catalyses beta-D-fructose 1,6-bisphosphate + H2O = beta-D-fructose 6-phosphate + phosphate. The protein operates within carbohydrate biosynthesis; gluconeogenesis. The chain is Fructose-1,6-bisphosphatase class 1 from Nitratidesulfovibrio vulgaris (strain DP4) (Desulfovibrio vulgaris).